A 311-amino-acid polypeptide reads, in one-letter code: tRNA dimethylallyltransferase (311 aa).

11 to 18 lines the ATP pocket; that stretch reads GPTAVGKT. Residue 13 to 18 participates in substrate binding; sequence TAVGKT. An interaction with substrate tRNA region spans residues 36–39; the sequence is DSMQ.

The protein belongs to the IPP transferase family. In terms of assembly, monomer. Mg(2+) serves as cofactor.

It carries out the reaction adenosine(37) in tRNA + dimethylallyl diphosphate = N(6)-dimethylallyladenosine(37) in tRNA + diphosphate. In terms of biological role, catalyzes the transfer of a dimethylallyl group onto the adenine at position 37 in tRNAs that read codons beginning with uridine, leading to the formation of N6-(dimethylallyl)adenosine (i(6)A). The sequence is that of tRNA dimethylallyltransferase from Clostridioides difficile (strain 630) (Peptoclostridium difficile).